We begin with the raw amino-acid sequence, 623 residues long: Leucine-rich repeat, immunoglobulin-like domain and transmembrane domain-containing protein 1 (623 aa).

The signal sequence occupies residues 1-21 (MWVALGMLWLLALGGPHQAWS). Residues 22–59 (FCPSQCSCSLHILSDGSKARTVVCSDPDLTLPPASIPP) form the LRRNT domain. At 22-526 (FCPSQCSCSL…EVVDAEGTQR (505 aa)) the chain is on the lumenal side. 5 LRR repeats span residues 60–81 (DTCK…TFRP), 84–105 (RLEQ…MLRG), 108–128 (RLRE…AALK), 132–153 (QLQL…AVHF), and 156–177 (NLTF…LLDT). An N-linked (GlcNAc...) asparagine glycan is attached at Asn-156. Residues 201–253 (NPWVCDCRLYDLVHLLDGWASNLIFIEARLRCGSPRSLAGVAFSQLELRKCQS) enclose the LRRCT domain. Residues 266–332 (PLGSTVLLRC…SGDYICQAKN (67 aa)) enclose the Ig-like C2-type domain. A disulfide bridge links Cys-275 with Cys-328. Asn-296 and Asn-455 each carry an N-linked (GlcNAc...) asparagine glycan. The 89-residue stretch at 430–518 (MVRSLKVVGD…QCVIFSTDEV (89 aa)) folds into the Fibronectin type-III domain. One copy of the LRR 6 repeat lies at 525-548 (QRLINMVVISVAAIIALPPTLLVC). The helical transmembrane segment at 527–547 (LINMVVISVAAIIALPPTLLV) threads the bilayer. Topologically, residues 548-623 (CCGALRRRCH…GGRRINEYFC (76 aa)) are cytoplasmic.

Homodimer. Interacts with LRIT2; may form a heterodimer with LRIT2. Interacts (via its N-terminal extracellular domain) with metabotropic glutamate receptor GRM6. Interacts (via its extreme C-terminus) with the scaffold protein FRMPD2 (via the third PDZ domain); the interaction leads to their colocalization in photoreceptor synapses. Retina, outer segments of photoreceptor cells.

The protein localises to the endoplasmic reticulum membrane. The protein resides in the cell projection. It localises to the dendrite. Photoreceptor synaptic protein essential for normal vision. Involved in synapse formation in cone photoreceptor cells. In Rattus norvegicus (Rat), this protein is Leucine-rich repeat, immunoglobulin-like domain and transmembrane domain-containing protein 1 (Lrit1).